Here is a 62-residue protein sequence, read N- to C-terminus: Protein UL148D (62 aa).

The chain crosses the membrane as a helical span at residues 30-50 (WWISVAIVIFIGVCLVALMYF).

Its subcellular location is the host membrane. This Human cytomegalovirus (strain Merlin) (HHV-5) protein is Protein UL148D (UL148D).